Here is a 340-residue protein sequence, read N- to C-terminus: MKALVKREAAKGIWLEEVPVPTPGPNEVLIKLEKTAICGTDLHIYLWDEWSQRTIKPGLTIGHEFVGRVAALGSAVTGYEIGQRVSAEGHIVCGHCRNCRGGRPHLCPNTVGIGVNVNGAFAEYMVMPASNLWPIPDQIPSELAAFFDPYGNAAHCALEFNVIGEDVLITGAGPIGIIAAGICKHIGARNVVVTDVNDFRLKLAADMGATRVVNVANQSLKDVMKELHMEGFDVGLEMSGNPRAFNDMLDCMYHGGKIAMLGIMPKGAGCDWDKIIFKGLTVQGIYGRKMYETWYKMTQLVLSGFPLGKVMTHQLPIDDFQKGFDLMEEGKAGKVVLSWN.

Position 38 (cysteine 38) interacts with Zn(2+). Residues threonine 40 and histidine 43 each act as charge relay system in the active site. 6 residues coordinate Zn(2+): histidine 63, glutamate 64, cysteine 93, cysteine 96, cysteine 99, and cysteine 107. Residues isoleucine 175, aspartate 195, arginine 200, 261–263 (LGI), and 285–286 (IY) each bind NAD(+).

It belongs to the zinc-containing alcohol dehydrogenase family. Homotetramer. The cofactor is Zn(2+).

It is found in the cytoplasm. It catalyses the reaction L-threonine + NAD(+) = (2S)-2-amino-3-oxobutanoate + NADH + H(+). It functions in the pathway amino-acid degradation; L-threonine degradation via oxydo-reductase pathway; glycine from L-threonine: step 1/2. Its function is as follows. Catalyzes the NAD(+)-dependent oxidation of L-threonine to 2-amino-3-ketobutyrate. The polypeptide is L-threonine 3-dehydrogenase (Stenotrophomonas maltophilia (strain K279a)).